Reading from the N-terminus, the 404-residue chain is MQYSEIMIRYGELSTKGKNRMRFINKLRNNISDVLSIYSQVKVTADRDRAHAYLNGADYTAVAESLKQVFGIQNFSPVYKVEKSVEVLKSSVQEIMRDIYKEGMTFKISSKRSDHNFELDSRELNQTLGGAVFEAIPNVQVQMKSPDINLQVEIREEAAYLSYETIRGAGGLPVGTSGKGMLMLSGGIDSPVAGYLALKRGVDIEAVHFASPPYTSPGALKKAQDLTRKLTKFGGNIQFIEVPFTEIQEEIKAKAPEAYLMTLTRRFMMRITDRIREVRNGLVIINGESLGQVASQTLESMKAINAVTNTPIIRPVVTMDKLEIIDIAQEIDTFDISIQPFEDCCTIFAPDRPKTNPKIKNAEQYEARMDVEGLVERAVAGIMITEITPQAEKDEVDDLIDNLL.

In terms of domain architecture, THUMP spans 60–165 (TAVAESLKQV…EEAAYLSYET (106 aa)). Residues 183–184 (ML), 208–209 (HF), Arg-265, Gly-287, and Gln-296 contribute to the ATP site.

The protein belongs to the ThiI family.

It localises to the cytoplasm. The enzyme catalyses [ThiI sulfur-carrier protein]-S-sulfanyl-L-cysteine + a uridine in tRNA + 2 reduced [2Fe-2S]-[ferredoxin] + ATP + H(+) = [ThiI sulfur-carrier protein]-L-cysteine + a 4-thiouridine in tRNA + 2 oxidized [2Fe-2S]-[ferredoxin] + AMP + diphosphate. The catalysed reaction is [ThiS sulfur-carrier protein]-C-terminal Gly-Gly-AMP + S-sulfanyl-L-cysteinyl-[cysteine desulfurase] + AH2 = [ThiS sulfur-carrier protein]-C-terminal-Gly-aminoethanethioate + L-cysteinyl-[cysteine desulfurase] + A + AMP + 2 H(+). Its pathway is cofactor biosynthesis; thiamine diphosphate biosynthesis. Catalyzes the ATP-dependent transfer of a sulfur to tRNA to produce 4-thiouridine in position 8 of tRNAs, which functions as a near-UV photosensor. Also catalyzes the transfer of sulfur to the sulfur carrier protein ThiS, forming ThiS-thiocarboxylate. This is a step in the synthesis of thiazole, in the thiamine biosynthesis pathway. The sulfur is donated as persulfide by IscS. In Streptococcus pneumoniae serotype 2 (strain D39 / NCTC 7466), this protein is Probable tRNA sulfurtransferase.